Reading from the N-terminus, the 372-residue chain is Glutamate 5-kinase (372 aa).

ATP is bound at residue K9. Substrate contacts are provided by S49, D136, and N148. ATP-binding positions include 168–169 and 210–216; these read TD and TGGMKSK. One can recognise a PUA domain in the interval 276–353; sequence AGSIEIDSGA…EEALSLTKRS (78 aa).

This sequence belongs to the glutamate 5-kinase family.

Its subcellular location is the cytoplasm. It carries out the reaction L-glutamate + ATP = L-glutamyl 5-phosphate + ADP. It participates in amino-acid biosynthesis; L-proline biosynthesis; L-glutamate 5-semialdehyde from L-glutamate: step 1/2. Catalyzes the transfer of a phosphate group to glutamate to form L-glutamate 5-phosphate. In Shouchella clausii (strain KSM-K16) (Alkalihalobacillus clausii), this protein is Glutamate 5-kinase.